Consider the following 335-residue polypeptide: Tetraacyldisaccharide 4'-kinase (335 aa).

58–65 (TVGGSGKT) is a binding site for ATP.

The protein belongs to the LpxK family.

The enzyme catalyses a lipid A disaccharide + ATP = a lipid IVA + ADP + H(+). It participates in glycolipid biosynthesis; lipid IV(A) biosynthesis; lipid IV(A) from (3R)-3-hydroxytetradecanoyl-[acyl-carrier-protein] and UDP-N-acetyl-alpha-D-glucosamine: step 6/6. Functionally, transfers the gamma-phosphate of ATP to the 4'-position of a tetraacyldisaccharide 1-phosphate intermediate (termed DS-1-P) to form tetraacyldisaccharide 1,4'-bis-phosphate (lipid IVA). This Shewanella sp. (strain ANA-3) protein is Tetraacyldisaccharide 4'-kinase.